A 1044-amino-acid polypeptide reads, in one-letter code: R3H domain-containing protein 2 (1044 aa).

Disordered stretches follow at residues 23 to 71 and 106 to 147; these read EESV…AKSN and SCPS…QEYT. The span at 36–56 shows a compositional bias: basic and acidic residues; that stretch reads PSKEDVEKEGEENGLRQETQR. Residue S37 is modified to Phosphoserine. Positions 58–71 are enriched in basic residues; sequence TSSHGHARKRAKSN. Over residues 109-143 the composition is skewed to basic and acidic residues; sequence SDKEEEKSTKDVSEKEDKDKSKEKVPRKMLSRDSS. S143 carries the post-translational modification Phosphoserine. Residues 169–232 enclose the R3H domain; sequence RMMLLKLEQE…AVIINKTSST (64 aa). Positions 233–303 constitute an SUZ domain; sequence RIPEQRFSEH…VRERIFARET (71 aa). Composition is skewed to basic and acidic residues over residues 261 to 270 and 277 to 288; these read DASMDRDDNQ and DGRRSKSIEERE. Disordered stretches follow at residues 261 to 288, 320 to 408, 433 to 485, 502 to 533, 551 to 600, 729 to 770, and 807 to 848; these read DASM…EERE, SSSS…LSRP, CTAQ…FSPS, MAED…LFQP, GQPL…SNQQ, GTSP…SPSG, and GQKP…SLSN. Residues 338 to 349 are compositionally biased toward low complexity; it reads SRTSSSRQSSTD. S362, S365, and S381 each carry phosphoserine. Positions 433-449 are enriched in low complexity; the sequence is CTAQQQQQQQQQQQQLP. Composition is skewed to polar residues over residues 509 to 521 and 554 to 572; these read PFGQ…QGST and LPTS…QQVL. Residues 757–770 are compositionally biased toward low complexity; that stretch reads PQMSQQYSGVSPSG. Polar residues predominate over residues 818-848; it reads GSPQANAQMGSSPVTSPTQSPAPSPVTSLSN. S921 and S923 each carry phosphoserine. Residues T924 and T928 each carry the phosphothreonine modification.

The protein localises to the nucleus. This chain is R3H domain-containing protein 2 (R3hdm2), found in Mus musculus (Mouse).